Here is a 371-residue protein sequence, read N- to C-terminus: 4-hydroxy-3-methylbut-2-en-1-yl diphosphate synthase (flavodoxin) (371 aa).

Positions 270, 273, 305, and 312 each coordinate [4Fe-4S] cluster.

It belongs to the IspG family. The cofactor is [4Fe-4S] cluster.

It catalyses the reaction (2E)-4-hydroxy-3-methylbut-2-enyl diphosphate + oxidized [flavodoxin] + H2O + 2 H(+) = 2-C-methyl-D-erythritol 2,4-cyclic diphosphate + reduced [flavodoxin]. It participates in isoprenoid biosynthesis; isopentenyl diphosphate biosynthesis via DXP pathway; isopentenyl diphosphate from 1-deoxy-D-xylulose 5-phosphate: step 5/6. Its function is as follows. Converts 2C-methyl-D-erythritol 2,4-cyclodiphosphate (ME-2,4cPP) into 1-hydroxy-2-methyl-2-(E)-butenyl 4-diphosphate. This chain is 4-hydroxy-3-methylbut-2-en-1-yl diphosphate synthase (flavodoxin), found in Shewanella woodyi (strain ATCC 51908 / MS32).